The sequence spans 356 residues: 4-hydroxy-3-methylbut-2-en-1-yl diphosphate synthase (flavodoxin) (356 aa).

[4Fe-4S] cluster-binding residues include Cys264, Cys267, Cys299, and Glu306.

This sequence belongs to the IspG family. Requires [4Fe-4S] cluster as cofactor.

The enzyme catalyses (2E)-4-hydroxy-3-methylbut-2-enyl diphosphate + oxidized [flavodoxin] + H2O + 2 H(+) = 2-C-methyl-D-erythritol 2,4-cyclic diphosphate + reduced [flavodoxin]. It functions in the pathway isoprenoid biosynthesis; isopentenyl diphosphate biosynthesis via DXP pathway; isopentenyl diphosphate from 1-deoxy-D-xylulose 5-phosphate: step 5/6. Functionally, converts 2C-methyl-D-erythritol 2,4-cyclodiphosphate (ME-2,4cPP) into 1-hydroxy-2-methyl-2-(E)-butenyl 4-diphosphate. This chain is 4-hydroxy-3-methylbut-2-en-1-yl diphosphate synthase (flavodoxin), found in Campylobacter lari (strain RM2100 / D67 / ATCC BAA-1060).